The following is a 227-amino-acid chain: Thiamine-phosphate synthase (227 aa).

Residues 46–50 and Asn87 contribute to the 4-amino-2-methyl-5-(diphosphooxymethyl)pyrimidine site; that span reads QLRDK. Asp88 and Asp107 together coordinate Mg(2+). Ser126 contributes to the 4-amino-2-methyl-5-(diphosphooxymethyl)pyrimidine binding site. 152–154 is a binding site for 2-[(2R,5Z)-2-carboxy-4-methylthiazol-5(2H)-ylidene]ethyl phosphate; that stretch reads TPT. Residue Lys155 participates in 4-amino-2-methyl-5-(diphosphooxymethyl)pyrimidine binding. 2-[(2R,5Z)-2-carboxy-4-methylthiazol-5(2H)-ylidene]ethyl phosphate is bound at residue Gly183.

It belongs to the thiamine-phosphate synthase family. Requires Mg(2+) as cofactor.

It carries out the reaction 2-[(2R,5Z)-2-carboxy-4-methylthiazol-5(2H)-ylidene]ethyl phosphate + 4-amino-2-methyl-5-(diphosphooxymethyl)pyrimidine + 2 H(+) = thiamine phosphate + CO2 + diphosphate. The catalysed reaction is 2-(2-carboxy-4-methylthiazol-5-yl)ethyl phosphate + 4-amino-2-methyl-5-(diphosphooxymethyl)pyrimidine + 2 H(+) = thiamine phosphate + CO2 + diphosphate. It catalyses the reaction 4-methyl-5-(2-phosphooxyethyl)-thiazole + 4-amino-2-methyl-5-(diphosphooxymethyl)pyrimidine + H(+) = thiamine phosphate + diphosphate. It functions in the pathway cofactor biosynthesis; thiamine diphosphate biosynthesis; thiamine phosphate from 4-amino-2-methyl-5-diphosphomethylpyrimidine and 4-methyl-5-(2-phosphoethyl)-thiazole: step 1/1. In terms of biological role, condenses 4-methyl-5-(beta-hydroxyethyl)thiazole monophosphate (THZ-P) and 2-methyl-4-amino-5-hydroxymethyl pyrimidine pyrophosphate (HMP-PP) to form thiamine monophosphate (TMP). In Mycolicibacterium smegmatis (strain ATCC 700084 / mc(2)155) (Mycobacterium smegmatis), this protein is Thiamine-phosphate synthase.